Reading from the N-terminus, the 81-residue chain is MNIDSHTFLLGMQYLGAGLAAIGCIGGGVGIGTVTGKAVEAIGRQPESASKVMPTMIMGLAFAEVTSLYALFVAIMLLFVK.

A run of 2 helical transmembrane segments spans residues 14–34 (YLGA…IGTV) and 60–80 (LAFA…LLFV).

Belongs to the ATPase C chain family. F-type ATPases have 2 components, F(1) - the catalytic core - and F(0) - the membrane proton channel. F(1) has five subunits: alpha(3), beta(3), gamma(1), delta(1), epsilon(1). F(0) has three main subunits: a(1), b(2) and c(10-14). The alpha and beta chains form an alternating ring which encloses part of the gamma chain. F(1) is attached to F(0) by a central stalk formed by the gamma and epsilon chains, while a peripheral stalk is formed by the delta and b chains.

The protein localises to the cell membrane. F(1)F(0) ATP synthase produces ATP from ADP in the presence of a proton or sodium gradient. F-type ATPases consist of two structural domains, F(1) containing the extramembraneous catalytic core and F(0) containing the membrane proton channel, linked together by a central stalk and a peripheral stalk. During catalysis, ATP synthesis in the catalytic domain of F(1) is coupled via a rotary mechanism of the central stalk subunits to proton translocation. Its function is as follows. Key component of the F(0) channel; it plays a direct role in translocation across the membrane. A homomeric c-ring of between 10-14 subunits forms the central stalk rotor element with the F(1) delta and epsilon subunits. This Clostridium acetobutylicum (strain ATCC 824 / DSM 792 / JCM 1419 / IAM 19013 / LMG 5710 / NBRC 13948 / NRRL B-527 / VKM B-1787 / 2291 / W) protein is ATP synthase subunit c.